Here is a 283-residue protein sequence, read N- to C-terminus: Pantothenate synthetase (283 aa).

30–37 is a binding site for ATP; it reads MGYLHEGH. Residue His37 is the Proton donor of the active site. Residue Gln61 coordinates (R)-pantoate. Residue Gln61 participates in beta-alanine binding. An ATP-binding site is contributed by 147–150; that stretch reads GRKD. Gln153 lines the (R)-pantoate pocket. Residues Val176 and 184 to 187 contribute to the ATP site; that span reads MSSR.

Belongs to the pantothenate synthetase family. In terms of assembly, homodimer.

It is found in the cytoplasm. It carries out the reaction (R)-pantoate + beta-alanine + ATP = (R)-pantothenate + AMP + diphosphate + H(+). Its pathway is cofactor biosynthesis; (R)-pantothenate biosynthesis; (R)-pantothenate from (R)-pantoate and beta-alanine: step 1/1. Its function is as follows. Catalyzes the condensation of pantoate with beta-alanine in an ATP-dependent reaction via a pantoyl-adenylate intermediate. The sequence is that of Pantothenate synthetase from Syntrophotalea carbinolica (strain DSM 2380 / NBRC 103641 / GraBd1) (Pelobacter carbinolicus).